The sequence spans 212 residues: Large ribosomal subunit protein uL3 (212 aa).

Residues 136–155 are disordered; the sequence is THGNSLSHRSNGSIGQNQTP. Q153 carries the post-translational modification N5-methylglutamine.

It belongs to the universal ribosomal protein uL3 family. As to quaternary structure, part of the 50S ribosomal subunit. Forms a cluster with proteins L14 and L19. Methylated by PrmB.

Functionally, one of the primary rRNA binding proteins, it binds directly near the 3'-end of the 23S rRNA, where it nucleates assembly of the 50S subunit. In Shewanella oneidensis (strain ATCC 700550 / JCM 31522 / CIP 106686 / LMG 19005 / NCIMB 14063 / MR-1), this protein is Large ribosomal subunit protein uL3.